Consider the following 512-residue polypeptide: Cytochrome P450 1A1 (512 aa).

The mitochondrial targeting signal stretch occupies residues 29-40 (SRPRVPKGLKNP). S67 carries an O-linked (GlcNAc) serine glycan. Residue F224 participates in substrate binding. C457 provides a ligand contact to heme.

This sequence belongs to the cytochrome P450 family. As to quaternary structure, interacts with cytosolic chaperones HSP70 and HSP90; this interaction is required for initial targeting to mitochondria. Interacts (via mitochondrial targeting signal) with TOMM40 (via N-terminus); this interaction is required for translocation across the mitochondrial outer membrane. It depends on heme as a cofactor.

Its subcellular location is the endoplasmic reticulum membrane. The protein localises to the mitochondrion inner membrane. It is found in the microsome membrane. It localises to the cytoplasm. It carries out the reaction an organic molecule + reduced [NADPH--hemoprotein reductase] + O2 = an alcohol + oxidized [NADPH--hemoprotein reductase] + H2O + H(+). The catalysed reaction is estrone + reduced [NADPH--hemoprotein reductase] + O2 = 2-hydroxyestrone + oxidized [NADPH--hemoprotein reductase] + H2O + H(+). The enzyme catalyses estrone + reduced [NADPH--hemoprotein reductase] + O2 = 4-hydroxyestrone + oxidized [NADPH--hemoprotein reductase] + H2O + H(+). It catalyses the reaction estrone + reduced [NADPH--hemoprotein reductase] + O2 = 6alpha-hydroxyestrone + oxidized [NADPH--hemoprotein reductase] + H2O + H(+). It carries out the reaction estrone + reduced [NADPH--hemoprotein reductase] + O2 = 15alpha-hydroxyestrone + oxidized [NADPH--hemoprotein reductase] + H2O + H(+). The catalysed reaction is estrone + reduced [NADPH--hemoprotein reductase] + O2 = 16alpha-hydroxyestrone + oxidized [NADPH--hemoprotein reductase] + H2O + H(+). The enzyme catalyses 17beta-estradiol + reduced [NADPH--hemoprotein reductase] + O2 = 2-hydroxy-17beta-estradiol + oxidized [NADPH--hemoprotein reductase] + H2O + H(+). It catalyses the reaction 17beta-estradiol + reduced [NADPH--hemoprotein reductase] + O2 = 4-hydroxy-17beta-estradiol + oxidized [NADPH--hemoprotein reductase] + H2O + H(+). It carries out the reaction 17beta-estradiol + reduced [NADPH--hemoprotein reductase] + O2 = 6alpha-hydroxy-17beta-estradiol + oxidized [NADPH--hemoprotein reductase] + H2O + H(+). The catalysed reaction is 17beta-estradiol + reduced [NADPH--hemoprotein reductase] + O2 = 7alpha-hydroxy-17beta-estradiol + oxidized [NADPH--hemoprotein reductase] + H2O + H(+). The enzyme catalyses 17beta-estradiol + reduced [NADPH--hemoprotein reductase] + O2 = 15alpha-hydroxy-17beta-estradiol + oxidized [NADPH--hemoprotein reductase] + H2O + H(+). It catalyses the reaction (5Z,8Z,11Z)-eicosatrienoate + reduced [NADPH--hemoprotein reductase] + O2 = 19-hydroxy-(5Z,8Z,11Z)-eicosatrienoate + oxidized [NADPH--hemoprotein reductase] + H2O + H(+). It carries out the reaction (5Z,8Z,11Z,14Z)-eicosatetraenoate + reduced [NADPH--hemoprotein reductase] + O2 = 16-hydroxy-(5Z,8Z,11Z,14Z)-eicosatetraenoate + oxidized [NADPH--hemoprotein reductase] + H2O + H(+). The catalysed reaction is (5Z,8Z,11Z,14Z)-eicosatetraenoate + reduced [NADPH--hemoprotein reductase] + O2 = 17-hydroxy-(5Z,8Z,11Z,14Z)-eicosatetraenoate + oxidized [NADPH--hemoprotein reductase] + H2O + H(+). The enzyme catalyses (5Z,8Z,11Z,14Z)-eicosatetraenoate + reduced [NADPH--hemoprotein reductase] + O2 = 18-hydroxy-(5Z,8Z,11Z,14Z)-eicosatetraenoate + oxidized [NADPH--hemoprotein reductase] + H2O + H(+). It catalyses the reaction (5Z,8Z,11Z,14Z)-eicosatetraenoate + reduced [NADPH--hemoprotein reductase] + O2 = 19-hydroxy-(5Z,8Z,11Z,14Z)-eicosatetraenoate + oxidized [NADPH--hemoprotein reductase] + H2O + H(+). It carries out the reaction (5Z,8Z,11Z,14Z,17Z)-eicosapentaenoate + reduced [NADPH--hemoprotein reductase] + O2 = 19-hydroxy-(5Z,8Z,11Z,14Z,17Z)-eicosapentaenoate + oxidized [NADPH--hemoprotein reductase] + H2O + H(+). The catalysed reaction is (5Z,8Z,11Z,14Z)-eicosatetraenoate + reduced [NADPH--hemoprotein reductase] + O2 = (8R,9S)-epoxy-(5Z,11Z,14Z)-eicosatrienoate + oxidized [NADPH--hemoprotein reductase] + H2O + H(+). The enzyme catalyses (5Z,8Z,11Z,14Z)-eicosatetraenoate + reduced [NADPH--hemoprotein reductase] + O2 = (11R,12S)-epoxy-(5Z,8Z,14Z)-eicosatrienoate + oxidized [NADPH--hemoprotein reductase] + H2O + H(+). It catalyses the reaction (5Z,8Z,11Z,14Z)-eicosatetraenoate + reduced [NADPH--hemoprotein reductase] + O2 = (14S,15R)-epoxy-(5Z,8Z,11Z)-eicosatrienoate + oxidized [NADPH--hemoprotein reductase] + H2O + H(+). It carries out the reaction (5Z,8Z,11Z,14Z)-eicosatetraenoate + reduced [NADPH--hemoprotein reductase] + O2 = (14R,15S)-epoxy-(5Z,8Z,11Z)-eicosatrienoate + oxidized [NADPH--hemoprotein reductase] + H2O + H(+). The catalysed reaction is (5Z,8Z,11Z,14Z,17Z)-eicosapentaenoate + reduced [NADPH--hemoprotein reductase] + O2 = (17R,18S)-epoxy-(5Z,8Z,11Z,14Z)-eicosatetraenoate + oxidized [NADPH--hemoprotein reductase] + H2O + H(+). The enzyme catalyses (4Z,7Z,10Z,13Z,16Z,19Z)-docosahexaenoate + reduced [NADPH--hemoprotein reductase] + O2 = (19S,20R)-epoxy-(4Z,7Z,10Z,13Z,16Z)-docosapentaenoate + oxidized [NADPH--hemoprotein reductase] + H2O + H(+). It catalyses the reaction (4Z,7Z,10Z,13Z,16Z,19Z)-docosahexaenoate + reduced [NADPH--hemoprotein reductase] + O2 = (19R,20S)-epoxy-(4Z,7Z,10Z,13Z,16Z)-docosapentaenoate + oxidized [NADPH--hemoprotein reductase] + H2O + H(+). It carries out the reaction all-trans-retinol + reduced [NADPH--hemoprotein reductase] + O2 = all-trans-retinal + oxidized [NADPH--hemoprotein reductase] + 2 H2O + H(+). The catalysed reaction is all-trans-retinal + reduced [NADPH--hemoprotein reductase] + O2 = all-trans-retinoate + oxidized [NADPH--hemoprotein reductase] + H2O + 2 H(+). The enzyme catalyses (13S)-hydroperoxy-(9Z,11E)-octadecadienoate = 13-oxo-(9Z,11E)-octadecadienoate + H2O. It catalyses the reaction (12S)-hydroperoxy-(5Z,8Z,10E,14Z)-eicosatetraenoate = 12-oxo-(5Z,8Z,10E,14Z)-eicosatetraenoate + H2O. It carries out the reaction (15S)-hydroperoxy-(5Z,8Z,11Z,13E)-eicosatetraenoate = 15-oxo-(5Z,8Z,11Z,13E)-eicosatetraenoate + H2O. The catalysed reaction is (5S)-hydroperoxy-(6E,8Z,11Z,14Z)-eicosatetraenoate = 5-oxo-(6E,8Z,11Z,14Z)-eicosatetraenoate + H2O. It functions in the pathway steroid hormone biosynthesis. It participates in lipid metabolism; fatty acid metabolism. The protein operates within cofactor metabolism; retinol metabolism. In terms of biological role, a cytochrome P450 monooxygenase involved in the metabolism of various endogenous substrates, including fatty acids, steroid hormones and vitamins. Mechanistically, uses molecular oxygen inserting one oxygen atom into a substrate, and reducing the second into a water molecule, with two electrons provided by NADPH via cytochrome P450 reductase (CPR; NADPH-ferrihemoprotein reductase). Catalyzes the hydroxylation of carbon-hydrogen bonds. Exhibits high catalytic activity for the formation of hydroxyestrogens from estrone (E1) and 17beta-estradiol (E2), namely 2-hydroxy E1 and E2, as well as D-ring hydroxylated E1 and E2 at the C15alpha and C16alpha positions. Displays different regioselectivities for polyunsaturated fatty acids (PUFA) hydroxylation. Catalyzes the epoxidation of double bonds of certain PUFA. Converts arachidonic acid toward epoxyeicosatrienoic acid (EET) regioisomers, 8,9-, 11,12-, and 14,15-EET, that function as lipid mediators in the vascular system. Displays an absolute stereoselectivity in the epoxidation of eicosapentaenoic acid (EPA) producing the 17(R),18(S) enantiomer. May play an important role in all-trans retinoic acid biosynthesis in extrahepatic tissues. Catalyzes two successive oxidative transformation of all-trans retinol to all-trans retinal and then to the active form all-trans retinoic acid. May also participate in eicosanoids metabolism by converting hydroperoxide species into oxo metabolites (lipoxygenase-like reaction, NADPH-independent). This chain is Cytochrome P450 1A1 (CYP1A1), found in Macaca mulatta (Rhesus macaque).